The primary structure comprises 86 residues: Long neurotoxin homolog (86 aa).

The signal sequence occupies residues 1–21; the sequence is MKTLLLTLVVVTIVCLALGYT. Intrachain disulfides connect Cys24–Cys45, Cys27–Cys32, Cys38–Cys63, Cys67–Cys78, and Cys79–Cys84.

This sequence belongs to the three-finger toxin family. Ancestral subfamily. Orphan group II sub-subfamily. As to expression, expressed by the venom gland.

The protein resides in the secreted. Its function is as follows. Binds with low affinity and weakly inhibits muscle nicotinic acetylcholine receptor (nAChR). In Naja atra (Chinese cobra), this protein is Long neurotoxin homolog.